The chain runs to 153 residues: Aspartate carbamoyltransferase regulatory chain (153 aa).

Zn(2+) is bound by residues cysteine 109, cysteine 114, cysteine 138, and cysteine 141.

This sequence belongs to the PyrI family. In terms of assembly, contains catalytic and regulatory chains. The cofactor is Zn(2+).

In terms of biological role, involved in allosteric regulation of aspartate carbamoyltransferase. The polypeptide is Aspartate carbamoyltransferase regulatory chain (Cenarchaeum symbiosum (strain A)).